A 293-amino-acid polypeptide reads, in one-letter code: 4-hydroxy-tetrahydrodipicolinate synthase (293 aa).

Thr-45 is a binding site for pyruvate. Residue Tyr-133 is the Proton donor/acceptor of the active site. Lys-161 (schiff-base intermediate with substrate) is an active-site residue. Ile-203 provides a ligand contact to pyruvate.

It belongs to the DapA family. Homotetramer; dimer of dimers.

It is found in the cytoplasm. The catalysed reaction is L-aspartate 4-semialdehyde + pyruvate = (2S,4S)-4-hydroxy-2,3,4,5-tetrahydrodipicolinate + H2O + H(+). It functions in the pathway amino-acid biosynthesis; L-lysine biosynthesis via DAP pathway; (S)-tetrahydrodipicolinate from L-aspartate: step 3/4. Catalyzes the condensation of (S)-aspartate-beta-semialdehyde [(S)-ASA] and pyruvate to 4-hydroxy-tetrahydrodipicolinate (HTPA). The protein is 4-hydroxy-tetrahydrodipicolinate synthase of Aliivibrio salmonicida (strain LFI1238) (Vibrio salmonicida (strain LFI1238)).